The chain runs to 747 residues: Polyribonucleotide nucleotidyltransferase (747 aa).

2 residues coordinate Mg(2+): Asp-487 and Asp-493. Positions 554–613 (PSTTTIKIDKDKIRDIIGPGGKVIKEICETSGAKIDISDDGSVSVYASDRDKLKVALDKI) constitute a KH domain. Positions 623–691 (GEIFNGTVMK…NKGKAKLTIK (69 aa)) constitute an S1 motif domain. The segment at 691 to 747 (KNADKDKSSNNPKPKNNVNNAKENSEPERRDSSKKRAWNEDSNNDKEEAITERKYFN) is disordered. Over residues 699 to 712 (SNNPKPKNNVNNAK) the composition is skewed to low complexity. Basic and acidic residues predominate over residues 727-747 (AWNEDSNNDKEEAITERKYFN).

This sequence belongs to the polyribonucleotide nucleotidyltransferase family. It depends on Mg(2+) as a cofactor.

It localises to the cytoplasm. It carries out the reaction RNA(n+1) + phosphate = RNA(n) + a ribonucleoside 5'-diphosphate. Involved in mRNA degradation. Catalyzes the phosphorolysis of single-stranded polyribonucleotides processively in the 3'- to 5'-direction. The chain is Polyribonucleotide nucleotidyltransferase from Rickettsia felis (strain ATCC VR-1525 / URRWXCal2) (Rickettsia azadi).